Here is a 547-residue protein sequence, read N- to C-terminus: CTP synthase (547 aa).

Residues 1-265 (MARYVFITGG…DQAVLDAFGI (265 aa)) are amidoligase domain. Position 13 (S13) interacts with CTP. A UTP-binding site is contributed by S13. Residues 14–19 (SLGKGL) and D71 contribute to the ATP site. Positions 71 and 139 each coordinate Mg(2+). CTP contacts are provided by residues 146-148 (DIE), 186-191 (KTKPTQ), and K222. UTP is bound by residues 186-191 (KTKPTQ) and K222. The region spanning 291–546 (RVAIVGKYTQ…IRAAVEVSRL (256 aa)) is the Glutamine amidotransferase type-1 domain. G353 is an L-glutamine binding site. C380 serves as the catalytic Nucleophile; for glutamine hydrolysis. L-glutamine contacts are provided by residues 381–384 (LGMQ), E404, and R474. Catalysis depends on residues H519 and E521.

This sequence belongs to the CTP synthase family. As to quaternary structure, homotetramer.

It catalyses the reaction UTP + L-glutamine + ATP + H2O = CTP + L-glutamate + ADP + phosphate + 2 H(+). It carries out the reaction L-glutamine + H2O = L-glutamate + NH4(+). The enzyme catalyses UTP + NH4(+) + ATP = CTP + ADP + phosphate + 2 H(+). The protein operates within pyrimidine metabolism; CTP biosynthesis via de novo pathway; CTP from UDP: step 2/2. Allosterically activated by GTP, when glutamine is the substrate; GTP has no effect on the reaction when ammonia is the substrate. The allosteric effector GTP functions by stabilizing the protein conformation that binds the tetrahedral intermediate(s) formed during glutamine hydrolysis. Inhibited by the product CTP, via allosteric rather than competitive inhibition. In terms of biological role, catalyzes the ATP-dependent amination of UTP to CTP with either L-glutamine or ammonia as the source of nitrogen. Regulates intracellular CTP levels through interactions with the four ribonucleotide triphosphates. This chain is CTP synthase, found in Cereibacter sphaeroides (strain ATCC 17025 / ATH 2.4.3) (Rhodobacter sphaeroides).